The following is a 520-amino-acid chain: Maturase K (520 aa).

It belongs to the intron maturase 2 family. MatK subfamily.

It localises to the plastid. Its subcellular location is the chloroplast. Functionally, usually encoded in the trnK tRNA gene intron. Probably assists in splicing its own and other chloroplast group II introns. The protein is Maturase K of Liriope muscari (Big blue lilyturf).